The primary structure comprises 181 residues: ATP synthase subunit delta (181 aa).

This sequence belongs to the ATPase delta chain family. F-type ATPases have 2 components, F(1) - the catalytic core - and F(0) - the membrane proton channel. F(1) has five subunits: alpha(3), beta(3), gamma(1), delta(1), epsilon(1). F(0) has three main subunits: a(1), b(2) and c(10-14). The alpha and beta chains form an alternating ring which encloses part of the gamma chain. F(1) is attached to F(0) by a central stalk formed by the gamma and epsilon chains, while a peripheral stalk is formed by the delta and b chains.

It is found in the cell membrane. Functionally, f(1)F(0) ATP synthase produces ATP from ADP in the presence of a proton or sodium gradient. F-type ATPases consist of two structural domains, F(1) containing the extramembraneous catalytic core and F(0) containing the membrane proton channel, linked together by a central stalk and a peripheral stalk. During catalysis, ATP synthesis in the catalytic domain of F(1) is coupled via a rotary mechanism of the central stalk subunits to proton translocation. Its function is as follows. This protein is part of the stalk that links CF(0) to CF(1). It either transmits conformational changes from CF(0) to CF(1) or is implicated in proton conduction. The sequence is that of ATP synthase subunit delta from Shouchella clausii (strain KSM-K16) (Alkalihalobacillus clausii).